The sequence spans 392 residues: NADH-quinone oxidoreductase subunit D (392 aa).

The protein belongs to the complex I 49 kDa subunit family. In terms of assembly, NDH-1 is composed of 14 different subunits. Subunits NuoB, C, D, E, F, and G constitute the peripheral sector of the complex.

Its subcellular location is the cell inner membrane. It catalyses the reaction a quinone + NADH + 5 H(+)(in) = a quinol + NAD(+) + 4 H(+)(out). Functionally, NDH-1 shuttles electrons from NADH, via FMN and iron-sulfur (Fe-S) centers, to quinones in the respiratory chain. The immediate electron acceptor for the enzyme in this species is believed to be ubiquinone. Couples the redox reaction to proton translocation (for every two electrons transferred, four hydrogen ions are translocated across the cytoplasmic membrane), and thus conserves the redox energy in a proton gradient. The polypeptide is NADH-quinone oxidoreductase subunit D (Paramagnetospirillum magneticum (strain ATCC 700264 / AMB-1) (Magnetospirillum magneticum)).